A 206-amino-acid polypeptide reads, in one-letter code: MVSYKLIYFQSRGNGEIARQVFAFAGQEFIDERISKEQWAEIKNMTPFGQVPVLEVDGRQLAQSITIVRYLSKQFGISGKSSWEEAQVDALGDQFKDYRVEARPFFRAKMGFSDGDVDQLYKDLFVPAFNKMYSIFTESLKSSGSGFLVGDSLTWMDLAIAQHSADLLEADGKILDTFLEMKDHQKKIHSIPNVKKWIEKRPVTSR.

The region spanning 2-79 (VSYKLIYFQS…YLSKQFGISG (78 aa)) is the GST N-terminal domain. Glutathione-binding positions include tyrosine 8, tryptophan 39, lysine 43, 49–51 (GQV), and 63–64 (QS). Residues 81–206 (SSWEEAQVDA…WIEKRPVTSR (126 aa)) form the GST C-terminal domain.

This sequence belongs to the GST superfamily. Sigma family.

The catalysed reaction is RX + glutathione = an S-substituted glutathione + a halide anion + H(+). Conjugation of reduced glutathione to a wide number of exogenous and endogenous hydrophobic electrophiles. This chain is Probable glutathione S-transferase 9 (gst-9), found in Caenorhabditis elegans.